Here is a 325-residue protein sequence, read N- to C-terminus: Hydroxymethylglutaryl-CoA lyase, mitochondrial (325 aa).

A mitochondrion-targeting transit peptide spans 1-27 (MAAMTKALPRRLVGLASLRAVSTSSMD). Residues 33–300 (VKIVEVGPRD…HTGVNLQKLL (268 aa)) form the Pyruvate carboxyltransferase domain. Position 41 (Arg-41) interacts with substrate. Asp-42 serves as a coordination point for a divalent metal cation. Position 48 is an N6-acetyllysine; alternate (Lys-48). Position 48 is an N6-succinyllysine; alternate (Lys-48). Lys-111 is subject to N6-acetyllysine. An N6-acetyllysine; alternate mark is found at Lys-137 and Lys-179. An N6-succinyllysine; alternate mark is found at Lys-137 and Lys-179. A divalent metal cation-binding residues include His-233 and His-235. Cys-266 is an active-site residue. Asn-275 serves as a coordination point for a divalent metal cation. The Microbody targeting signal signature appears at 323–325 (CKL). Lys-324 is modified (N6-acetyllysine).

Belongs to the HMG-CoA lyase family. In terms of assembly, homodimer; disulfide-linked. Can also form homotetramers.

The protein resides in the mitochondrion matrix. The protein localises to the peroxisome. It catalyses the reaction (3S)-3-hydroxy-3-methylglutaryl-CoA = acetoacetate + acetyl-CoA. Its pathway is metabolic intermediate metabolism; (S)-3-hydroxy-3-methylglutaryl-CoA degradation; acetoacetate from (S)-3-hydroxy-3-methylglutaryl-CoA: step 1/1. Its function is as follows. Mitochondrial 3-hydroxy-3-methylglutaryl-CoA lyase that catalyzes a cation-dependent cleavage of (S)-3-hydroxy-3-methylglutaryl-CoA into acetyl-CoA and acetoacetate, a key step in ketogenesis. Terminal step in leucine catabolism. Ketone bodies (beta-hydroxybutyrate, acetoacetate and acetone) are essential as an alternative source of energy to glucose, as lipid precursors and as regulators of metabolism. This is Hydroxymethylglutaryl-CoA lyase, mitochondrial (HMGCL) from Macaca fascicularis (Crab-eating macaque).